The chain runs to 234 residues: 7-cyano-7-deazaguanine synthase (234 aa).

An ATP-binding site is contributed by 13 to 23; it reads LSGGQDSTTCL. Cysteine 193, cysteine 201, cysteine 204, and cysteine 207 together coordinate Zn(2+).

This sequence belongs to the QueC family. Requires Zn(2+) as cofactor.

It carries out the reaction 7-carboxy-7-deazaguanine + NH4(+) + ATP = 7-cyano-7-deazaguanine + ADP + phosphate + H2O + H(+). It participates in purine metabolism; 7-cyano-7-deazaguanine biosynthesis. Its function is as follows. Catalyzes the ATP-dependent conversion of 7-carboxy-7-deazaguanine (CDG) to 7-cyano-7-deazaguanine (preQ(0)). In Chromobacterium violaceum (strain ATCC 12472 / DSM 30191 / JCM 1249 / CCUG 213 / NBRC 12614 / NCIMB 9131 / NCTC 9757 / MK), this protein is 7-cyano-7-deazaguanine synthase.